A 156-amino-acid polypeptide reads, in one-letter code: Small ribosomal subunit protein uS7 (156 aa).

The protein belongs to the universal ribosomal protein uS7 family. In terms of assembly, part of the 30S ribosomal subunit. Contacts proteins S9 and S11.

Functionally, one of the primary rRNA binding proteins, it binds directly to 16S rRNA where it nucleates assembly of the head domain of the 30S subunit. Is located at the subunit interface close to the decoding center, probably blocks exit of the E-site tRNA. This Photorhabdus laumondii subsp. laumondii (strain DSM 15139 / CIP 105565 / TT01) (Photorhabdus luminescens subsp. laumondii) protein is Small ribosomal subunit protein uS7.